The chain runs to 55 residues: Lantibiotic epilancin 15X (55 aa).

Positions 1–24 (MKKELFDLNLNKDIEAQKSDLNPQ) are cleaved as a propeptide — cleaved by ElxP. D-lactate; by the dehydratase ElxB and the dehydrogenase ElxO is present on Ser-25. Ser-27 carries the 2,3-didehydroalanine (Ser); by the dehydratase ElxB modification. A 2,3-didehydrobutyrine; by the dehydratase ElxB mark is found at Thr-31 and Thr-32. The lanthionine (Ser-Cys); by the dehydratase ElxB and the cyclase ElxC cross-link spans 36–40 (SKKLC). 2 consecutive cross-links (beta-methyllanthionine (Thr-Cys); by the dehydratase ElxB and the cyclase ElxC) follow at residues 44 to 47 (TLTC) and 46 to 49 (TCGC). Thr-52 bears the 2,3-didehydrobutyrine; by the dehydratase ElxB mark.

Post-translationally, maturation of this lantibiotic involves the enzymatic conversion of Thr, and Ser into dehydrated AA by ElxB and the formation of thioether bonds with cysteine by the cyclase ElxC. The next steps are cleavage of the leader peptide by ElxP and membrane translocation by ElxT. The leader peptide may be removed before membrane translocation, in contrast to other lantibiotics for which the cleavage occur after translocation. This is suggested by the probable cytoplasmic localization of the serine protease ElxP that cleaves the leader peptide. In terms of processing, the N-terminal D-lactate is probably produced by dehydration of Ser-25 by ElxB, followed by proteolytic removal of the leader peptide by the serine protease ElxP and hydrolysis of the resulting new N-terminal dehydroalanine. This hydrolysis may occur spontaneously. The pyruvate group thus formed is reduced to D-lactate by the NADPH-dependent oxidoreductase ElxO. This N-terminal D-lactate protects the lantibiotic against degradation against aminopeptidase. It is not established whether the 2,3-didehydrobutyrines are the E- or Z-isomers.

Functionally, lanthionine-containing peptide antibiotic (lantibiotic) active on Gram-positive bacteria such as staphylococci, enterococci and streptococci. The bactericidal activity of lantibiotics is based on depolarization of energized bacterial cytoplasmic membranes, initiated by the formation of aqueous transmembrane pores. The sequence is that of Lantibiotic epilancin 15X from Staphylococcus epidermidis.